A 176-amino-acid polypeptide reads, in one-letter code: Small ribosomal subunit protein uS5 (176 aa).

Positions Phe-15–Val-78 constitute an S5 DRBM domain.

It belongs to the universal ribosomal protein uS5 family. In terms of assembly, part of the 30S ribosomal subunit. Contacts proteins S4 and S8.

In terms of biological role, with S4 and S12 plays an important role in translational accuracy. Its function is as follows. Located at the back of the 30S subunit body where it stabilizes the conformation of the head with respect to the body. The chain is Small ribosomal subunit protein uS5 from Thermosipho africanus (strain TCF52B).